A 653-amino-acid chain; its full sequence is Endoglin (653 aa).

Residues 1–26 (MDRGVLPLPITLLFVIYSFVPTTGLA) form the signal peptide. Residues 27–47 (ERVGCDLQPVDPTRGEVTFTT) are OR1, N-terminal part. The required for interaction with GDF2 stretch occupies residues 27 to 337 (ERVGCDLQPV…SSCGGVFQTT (311 aa)). The Extracellular portion of the chain corresponds to 27–581 (ERVGCDLQPV…IVSPDLSGKG (555 aa)). Intrachain disulfides connect C31-C209, C54-C184, C244-C330, C350-C382, C363-C442, C394-C412, and C493-C549. An OR2 region spans residues 48-201 (SQVSEGCVAQ…MGATLEWQPR (154 aa)). N-linked (GlcNAc...) asparagine glycans are attached at residues N89, N135, and N266. Residues 202-330 (AQTPVQSCRL…SNVSLRASSC (129 aa)) form an OR1, C-terminal part region. The essential for interaction with GDF2 stretch occupies residues 270 to 282 (QILTTGEYSVKIF). N307 and N322 each carry an N-linked (GlcNAc...) asparagine glycan. Residues 363–510 (CGNQVMTLAL…GDMVELIQSR (148 aa)) enclose the ZP domain. The helical transmembrane segment at 582–606 (LVLPSVLGITFGAFLIGALLTAALW) threads the bilayer. At 607–653 (YIYSHTRGPSKREPVVAVAAPASSESSSTNHSIGSTQSTPCSTSSMA) the chain is on the cytoplasmic side. The segment covering 624-634 (VAAPASSESSS) has biased composition (low complexity). Positions 624–653 (VAAPASSESSSTNHSIGSTQSTPCSTSSMA) are disordered. Residues 635–653 (TNHSIGSTQSTPCSTSSMA) show a composition bias toward polar residues. A phosphoserine; by TGFBR1 mark is found at S641 and S644.

In terms of assembly, homodimer; disulfide-linked. Forms a heteromeric complex with the signaling receptors for transforming growth factor-beta: TGFBR1 and/or TGFBR2. Interacts with TGFB1. It is able to bind TGFB1 and TGFB2 with high affinity, but not TGFB3. Interacts with GDF2, forming a heterotetramer with a 2:2 stoichiometry. Interacts with ACVRL1. Can form a heteromeric complex with GDF2 and ACVRL1. Interacts with BMP10. Interacts with DYNLT4. Interacts with ARRB2. As to expression, detected on blood vessels (at protein level). Detected on adult pulmonary artery, capillaries supporting the heart muscle and lung alveolar capillary endothelial cells. Endoglin is restricted to endothelial cells in all tissues except bone marrow and is also found in stromal cells within the connective tissue of intestine, stomach, heart, skeletal muscle, uterus, ovary, oviduct, testis and thymus.

The protein resides in the cell membrane. Functionally, vascular endothelium glycoprotein that plays an important role in the regulation of angiogenesis. Required for normal structure and integrity of adult vasculature. Regulates the migration of vascular endothelial cells. Required for normal extraembryonic angiogenesis and for embryonic heart development. May regulate endothelial cell shape changes in response to blood flow, which drive vascular remodeling and establishment of normal vascular morphology during angiogenesis. May play a role in the binding of endothelial cells to integrins. Acts as a TGF-beta coreceptor and is involved in the TGF-beta/BMP signaling cascade that ultimately leads to the activation of SMAD transcription factors. Required for GDF2/BMP9 signaling through SMAD1 in endothelial cells and modulates TGFB1 signaling through SMAD3. The protein is Endoglin (Eng) of Mus musculus (Mouse).